Here is a 519-residue protein sequence, read N- to C-terminus: DNA damage-binding protein CMR1 (519 aa).

The segment at 35–92 (AEAGLGPTGKSRAAASSKPRVKKPAPKKIKQEDIAPRRTSSRLKGIEADSEKAKRKAE) is disordered. Residues 53–62 (PRVKKPAPKK) are compositionally biased toward basic residues. The span at 78–92 (KGIEADSEKAKRKAE) shows a compositional bias: basic and acidic residues. WD repeat units follow at residues 240-280 (PHTR…AVEV), 287-327 (NEDQ…DQAE), 331-371 (LSEK…GKGD), 380-420 (EHES…EWAT), 442-485 (GRWV…LAQL), and 488-519 (DGITAVPAVAKFHPTLDWVAAGTASGKLCLWM).

This sequence belongs to the WD repeat DDB2/WDR76 family.

Functionally, DNA-binding protein that binds to both single- and double-stranded DNA. Binds preferentially to UV-damaged DNA. May be involved in DNA-metabolic processes. The chain is DNA damage-binding protein CMR1 from Phaeosphaeria nodorum (strain SN15 / ATCC MYA-4574 / FGSC 10173) (Glume blotch fungus).